The primary structure comprises 143 residues: Endoribonuclease YbeY (143 aa).

His-109, His-113, and His-119 together coordinate Zn(2+).

It belongs to the endoribonuclease YbeY family. Requires Zn(2+) as cofactor.

It localises to the cytoplasm. Single strand-specific metallo-endoribonuclease involved in late-stage 70S ribosome quality control and in maturation of the 3' terminus of the 16S rRNA. The sequence is that of Endoribonuclease YbeY from Neorickettsia sennetsu (strain ATCC VR-367 / Miyayama) (Ehrlichia sennetsu).